Reading from the N-terminus, the 257-residue chain is Imidazole glycerol phosphate synthase subunit HisF (257 aa).

Residues Asp-11 and Asp-130 contribute to the active site.

This sequence belongs to the HisA/HisF family. In terms of assembly, heterodimer of HisH and HisF.

The protein localises to the cytoplasm. The enzyme catalyses 5-[(5-phospho-1-deoxy-D-ribulos-1-ylimino)methylamino]-1-(5-phospho-beta-D-ribosyl)imidazole-4-carboxamide + L-glutamine = D-erythro-1-(imidazol-4-yl)glycerol 3-phosphate + 5-amino-1-(5-phospho-beta-D-ribosyl)imidazole-4-carboxamide + L-glutamate + H(+). The protein operates within amino-acid biosynthesis; L-histidine biosynthesis; L-histidine from 5-phospho-alpha-D-ribose 1-diphosphate: step 5/9. In terms of biological role, IGPS catalyzes the conversion of PRFAR and glutamine to IGP, AICAR and glutamate. The HisF subunit catalyzes the cyclization activity that produces IGP and AICAR from PRFAR using the ammonia provided by the HisH subunit. This is Imidazole glycerol phosphate synthase subunit HisF from Shewanella denitrificans (strain OS217 / ATCC BAA-1090 / DSM 15013).